Reading from the N-terminus, the 431-residue chain is Tyrosine--tRNA ligase (431 aa).

Tyr-33 contacts L-tyrosine. A 'HIGH' region motif is present at residues 38-47 (PTADSLHIGS). L-tyrosine-binding residues include Tyr-172 and Gln-176. The short motif at 234–238 (KFGKS) is the 'KMSKS' region element. Lys-237 provides a ligand contact to ATP. One can recognise an S4 RNA-binding domain in the interval 364–431 (LDIVTVLNEK…KKNYFVIRVV (68 aa)).

This sequence belongs to the class-I aminoacyl-tRNA synthetase family. TyrS type 1 subfamily. As to quaternary structure, homodimer.

The protein resides in the cytoplasm. It catalyses the reaction tRNA(Tyr) + L-tyrosine + ATP = L-tyrosyl-tRNA(Tyr) + AMP + diphosphate + H(+). In terms of biological role, catalyzes the attachment of tyrosine to tRNA(Tyr) in a two-step reaction: tyrosine is first activated by ATP to form Tyr-AMP and then transferred to the acceptor end of tRNA(Tyr). The sequence is that of Tyrosine--tRNA ligase from Flavobacterium johnsoniae (strain ATCC 17061 / DSM 2064 / JCM 8514 / BCRC 14874 / CCUG 350202 / NBRC 14942 / NCIMB 11054 / UW101) (Cytophaga johnsonae).